A 650-amino-acid chain; its full sequence is Chaperone protein DnaK (650 aa).

Position 200 is a phosphothreonine; by autocatalysis (threonine 200). Positions 614 to 634 are disordered; the sequence is AGAAGAAGAAEGAAHAGGAQQ.

It belongs to the heat shock protein 70 family.

In terms of biological role, acts as a chaperone. This Burkholderia cenocepacia (strain ATCC BAA-245 / DSM 16553 / LMG 16656 / NCTC 13227 / J2315 / CF5610) (Burkholderia cepacia (strain J2315)) protein is Chaperone protein DnaK.